The chain runs to 679 residues: DNA ligase (679 aa).

NAD(+)-binding positions include 43–47 (DYVYD), 92–93 (SM), and glutamate 124. Lysine 126 functions as the N6-AMP-lysine intermediate in the catalytic mechanism. NAD(+) contacts are provided by arginine 147, glutamate 181, lysine 297, and lysine 321. 4 residues coordinate Zn(2+): cysteine 415, cysteine 418, cysteine 433, and cysteine 438. The BRCT domain maps to 599–679 (TESAEWAGKR…RFDQAMKEEN (81 aa)).

It belongs to the NAD-dependent DNA ligase family. LigA subfamily. Mg(2+) is required as a cofactor. It depends on Mn(2+) as a cofactor.

The catalysed reaction is NAD(+) + (deoxyribonucleotide)n-3'-hydroxyl + 5'-phospho-(deoxyribonucleotide)m = (deoxyribonucleotide)n+m + AMP + beta-nicotinamide D-nucleotide.. DNA ligase that catalyzes the formation of phosphodiester linkages between 5'-phosphoryl and 3'-hydroxyl groups in double-stranded DNA using NAD as a coenzyme and as the energy source for the reaction. It is essential for DNA replication and repair of damaged DNA. The protein is DNA ligase of Limosilactobacillus fermentum (strain NBRC 3956 / LMG 18251) (Lactobacillus fermentum).